The following is a 560-amino-acid chain: Potassium-transporting ATPase potassium-binding subunit (560 aa).

The next 12 membrane-spanning stretches (helical) occupy residues 6 to 26 (FLLIASFLLVLMALAKPLGSL), 63 to 83 (LLAILLFNTLGLVLLFAILMC), 132 to 152 (GLAVQNFLSAATGIAVAFALI), 175 to 195 (LWVLMPISLIIALFFIQQGAI), 250 to 270 (LTNVVQMLAIFLIPAALCFAF), 282 to 302 (AILWTMTVIFVVCVALVMWAE), 327 to 347 (FGILASSLFAVVTTAASCGAV), 356 to 376 (ALGGMIPMWLMQIGEVVFGGV), 379 to 399 (GLYGMLLFVLLGVFIAGLMIG), 416 to 436 (MTALAILVTPALVLLGTALAM), 483 to 503 (LLLAFCMWFGRFLVIIPVMAI), and 524 to 544 (GALFIGLLTGTVLLVGALTFI).

This sequence belongs to the KdpA family. In terms of assembly, the system is composed of three essential subunits: KdpA, KdpB and KdpC.

It is found in the cell inner membrane. In terms of biological role, part of the high-affinity ATP-driven potassium transport (or Kdp) system, which catalyzes the hydrolysis of ATP coupled with the electrogenic transport of potassium into the cytoplasm. This subunit binds the periplasmic potassium ions and delivers the ions to the membrane domain of KdpB through an intramembrane tunnel. In Cronobacter sakazakii (strain ATCC BAA-894) (Enterobacter sakazakii), this protein is Potassium-transporting ATPase potassium-binding subunit.